Reading from the N-terminus, the 59-residue chain is Beta-defensin 134 (59 aa).

A signal peptide spans 1 to 19 (MKPLLVVFVFLFLWDPVLA). 3 disulfide bridges follow: Cys-25–Cys-51, Cys-31–Cys-45, and Cys-35–Cys-52.

This sequence belongs to the beta-defensin family.

It is found in the secreted. In terms of biological role, has antibacterial activity. This Pan troglodytes (Chimpanzee) protein is Beta-defensin 134 (DEFB134).